We begin with the raw amino-acid sequence, 154 residues long: Endoribonuclease YbeY (154 aa).

His118, His122, and His128 together coordinate Zn(2+).

Belongs to the endoribonuclease YbeY family. It depends on Zn(2+) as a cofactor.

It is found in the cytoplasm. Its function is as follows. Single strand-specific metallo-endoribonuclease involved in late-stage 70S ribosome quality control and in maturation of the 3' terminus of the 16S rRNA. The polypeptide is Endoribonuclease YbeY (Chloroflexus aurantiacus (strain ATCC 29366 / DSM 635 / J-10-fl)).